The following is an 84-amino-acid chain: Three-finger toxin 3FTx-1 (84 aa).

A signal peptide spans Met-1–Ser-21. 4 disulfide bridges follow: Cys-24-Cys-41, Cys-34-Cys-59, Cys-63-Cys-71, and Cys-72-Cys-77. Asn-78 carries an N-linked (GlcNAc...) asparagine glycan.

It belongs to the three-finger toxin family. Short-chain subfamily. Expressed by the venom gland.

It localises to the secreted. This Micrurus corallinus (Brazilian coral snake) protein is Three-finger toxin 3FTx-1.